The primary structure comprises 91 residues: Small ribosomal subunit protein bS16 (91 aa).

It belongs to the bacterial ribosomal protein bS16 family.

The polypeptide is Small ribosomal subunit protein bS16 (Exiguobacterium sibiricum (strain DSM 17290 / CCUG 55495 / CIP 109462 / JCM 13490 / 255-15)).